The following is a 511-amino-acid chain: Glycerol kinase (511 aa).

An ADP-binding site is contributed by Thr-11. Residues Thr-11, Ser-12, and Ser-13 each contribute to the ATP site. Thr-11 is a sn-glycerol 3-phosphate binding site. ADP is bound at residue Arg-15. Sn-glycerol 3-phosphate contacts are provided by Arg-81, Glu-82, Tyr-133, and Asp-242. Residues Arg-81, Glu-82, Tyr-133, Asp-242, and Gln-243 each contribute to the glycerol site. ADP-binding residues include Thr-264 and Gly-321. Residues Thr-264, Gly-321, Gln-325, and Gly-426 each coordinate ATP. Residues Gly-426 and Asn-430 each contribute to the ADP site.

It belongs to the FGGY kinase family.

It carries out the reaction glycerol + ATP = sn-glycerol 3-phosphate + ADP + H(+). The protein operates within polyol metabolism; glycerol degradation via glycerol kinase pathway; sn-glycerol 3-phosphate from glycerol: step 1/1. Inhibited by fructose 1,6-bisphosphate (FBP). Its function is as follows. Key enzyme in the regulation of glycerol uptake and metabolism. Catalyzes the phosphorylation of glycerol to yield sn-glycerol 3-phosphate. The sequence is that of Glycerol kinase from Verminephrobacter eiseniae (strain EF01-2).